The chain runs to 216 residues: Sporamin B (216 aa).

An N-terminal signal peptide occupies residues 1–21 (MKALALLFVLSLYLLPNPAHS).

Belongs to the protease inhibitor I3 (leguminous Kunitz-type inhibitor) family. Accumulates specifically in tuberous roots and tubers upon tuberization. Sporamin accounts 60 to 80% of the total soluble protein of the organ.

Its subcellular location is the vacuole. Its function is as follows. Major tuberous root protein. The polypeptide is Sporamin B (GSPO-B1) (Ipomoea batatas (Sweet potato)).